Here is a 246-residue protein sequence, read N- to C-terminus: Large ribosomal subunit protein uL30 (246 aa).

Position 1 is an N-acetylmethionine (Met-1). Repeat copies occupy residues 7–17, 18–28, 29–40, and 41–52. The interval 7 to 52 is 4 X 12 AA tandem repeats; sequence KKVPSVPESLLKRRQAYAAAKAKRLKRLLAQKKFRKAQRKIIYERA.

The protein belongs to the universal ribosomal protein uL30 family. As to quaternary structure, component of the large ribosomal subunit.

It is found in the cytoplasm. Functionally, component of the large ribosomal subunit. The ribosome is a large ribonucleoprotein complex responsible for the synthesis of proteins in the cell. Binds to G-rich structures in 28S rRNA and in mRNAs. Plays a regulatory role in the translation apparatus; inhibits cell-free translation of mRNAs. The polypeptide is Large ribosomal subunit protein uL30 (RPL7) (Gallus gallus (Chicken)).